Reading from the N-terminus, the 513-residue chain is Cytochrome P450 monooxygenase eqxH (513 aa).

Residues 13–32 traverse the membrane as a helical segment; sequence QYAILCGITVFTLFIVQLSL. N-linked (GlcNAc...) asparagine glycosylation is found at Asn-130 and Asn-295. Cys-449 provides a ligand contact to heme.

The protein belongs to the cytochrome P450 family. It depends on heme as a cofactor.

Its subcellular location is the membrane. It participates in mycotoxin biosynthesis. Functionally, cytochrome P450 monooxygenase; part of the gene cluster that mediates the biosynthesis of equisetin, a trans-fused decalin-containing tetramic acid with antimicrobial activity. The PKS module of eqxS together with the enoylreductase eqxC catalyze the formation of the polyketide unit which is then conjugated to L-serine by the condensation domain of the eqxS NRPS module. Activity of the Dieckmann cyclase domain (RED) results in release of the Dieckmann product intermediate. Diels-Alderase eqx3 is involved in endo-selective Diels-Alder cycloaddition to form the decalin ring, leading to the production of N-desmethylequisetin also called trichosetin. Subsequent N-methylation is carried out by eqxD to give equisetin. The chain is Cytochrome P450 monooxygenase eqxH from Fusarium heterosporum.